A 102-amino-acid polypeptide reads, in one-letter code: uncharacterized protein (102 aa).

It belongs to the Gram-positive plasmids replication protein type 2 family.

This is an uncharacterized protein from Staphylococcus aureus.